We begin with the raw amino-acid sequence, 457 residues long: Acetylcholine receptor subunit alpha (457 aa).

The N-terminal stretch at 1-20 (MELTAVLLLLGLCSAGTVLG) is a signal peptide. The Extracellular segment spans residues 21–230 (SEHETRLVAK…ITYHFVMQRL (210 aa)). Cystine bridges form between Cys-148–Cys-162 and Cys-212–Cys-213. Asn-161 is a glycosylation site (N-linked (GlcNAc...) asparagine). 3 consecutive transmembrane segments (helical) span residues 231–255 (PLYFIVNVIIPCLLFSFLTSLVFYL), 263–281 (MTLSISVLLSLTVFLLVIV), and 297–316 (YMLFTMVFVIASIIITVIVI). At 317 to 428 (NTHHRSPSTH…WKYVAMVMDH (112 aa)) the chain is on the cytoplasmic side. The chain crosses the membrane as a helical span at residues 429–447 (ILLGVFMLVCLIGTLAVFA).

The protein belongs to the ligand-gated ion channel (TC 1.A.9) family. Acetylcholine receptor (TC 1.A.9.1) subfamily. Alpha-1/CHRNA1 sub-subfamily. One of the alpha chains that assemble within the acetylcholine receptor, a pentamer of two alpha chains, a beta, a delta, and a gamma (in immature muscle) or epsilon (in mature muscle) chains. The muscle heteropentamer composed of alpha-1, beta-1, delta, epsilon subunits interacts with the alpha-conotoxin ImII.

The protein localises to the postsynaptic cell membrane. It localises to the cell membrane. The enzyme catalyses K(+)(in) = K(+)(out). It catalyses the reaction Na(+)(in) = Na(+)(out). In terms of biological role, upon acetylcholine binding, the AChR responds by an extensive change in conformation that affects all subunits and leads to opening of an ion-conducting channel across the plasma membrane. The sequence is that of Acetylcholine receptor subunit alpha (Chrna1) from Rattus norvegicus (Rat).